A 338-amino-acid polypeptide reads, in one-letter code: Glyceraldehyde-3-phosphate dehydrogenase 2 (338 aa).

NAD(+)-binding positions include 13–14 (RI), Asp-35, and Arg-80. D-glyceraldehyde 3-phosphate-binding positions include 151–153 (SCT), Thr-182, 211–212 (TG), and Arg-234. Cys-152 serves as the catalytic Nucleophile. Asn-316 serves as a coordination point for NAD(+).

It belongs to the glyceraldehyde-3-phosphate dehydrogenase family. In terms of assembly, homotetramer.

It localises to the cytoplasm. It carries out the reaction D-glyceraldehyde 3-phosphate + phosphate + NAD(+) = (2R)-3-phospho-glyceroyl phosphate + NADH + H(+). Its pathway is carbohydrate degradation; glycolysis; pyruvate from D-glyceraldehyde 3-phosphate: step 1/5. Inhibited by koningic acid through the interaction of cysteine residues with koningic acid even at very low concentrations. The chain is Glyceraldehyde-3-phosphate dehydrogenase 2 (gpd2) from Trichoderma koningii (Hypocrea koningii).